Reading from the N-terminus, the 386-residue chain is 26S proteasome non-ATPase regulatory subunit 13 homolog B (386 aa).

An N-acetylalanine modification is found at A2. The PCI domain occupies 174–347; it reads FSEFYKNALL…GTVYVSWAQP (174 aa).

Belongs to the proteasome subunit S11 family. As to quaternary structure, component of the 19S regulatory particle (RP/PA700) lid subcomplex of the 26S proteasome. The 26S proteasome is composed of a core protease (CP), known as the 20S proteasome, capped at one or both ends by the 19S regulatory particle (RP/PA700). The RP/PA700 complex is composed of at least 17 different subunits in two subcomplexes, the base and the lid, which form the portions proximal and distal to the 20S proteolytic core, respectively. In terms of tissue distribution, ubiquitous with highest expression in flowers.

In terms of biological role, acts as a regulatory subunit of the 26S proteasome which is involved in the ATP-dependent degradation of ubiquitinated proteins. In Arabidopsis thaliana (Mouse-ear cress), this protein is 26S proteasome non-ATPase regulatory subunit 13 homolog B (RPN9B).